The chain runs to 170 residues: Adenine phosphoribosyltransferase (170 aa).

Belongs to the purine/pyrimidine phosphoribosyltransferase family. In terms of assembly, homodimer.

It localises to the cytoplasm. The catalysed reaction is AMP + diphosphate = 5-phospho-alpha-D-ribose 1-diphosphate + adenine. Its pathway is purine metabolism; AMP biosynthesis via salvage pathway; AMP from adenine: step 1/1. Functionally, catalyzes a salvage reaction resulting in the formation of AMP, that is energically less costly than de novo synthesis. The sequence is that of Adenine phosphoribosyltransferase from Thermotoga petrophila (strain ATCC BAA-488 / DSM 13995 / JCM 10881 / RKU-1).